Consider the following 389-residue polypeptide: Brix domain-containing protein C1B9.03c (389 aa).

One can recognise a Brix domain in the interval 28–309 (SMVIRSGASE…LIKITEDAMG (282 aa)). Basic and acidic residues predominate over residues 323 to 350 (EEIKQQDNFHEQSRALKEKRKKEQDENV). The disordered stretch occupies residues 323-389 (EEIKQQDNFH…EGSSAYSDTE (67 aa)). Residues 351–362 (RRKRENKKRRKD) are compositionally biased toward basic residues. Ser-377 is subject to Phosphoserine. Residues 379-389 (NEGSSAYSDTE) are compositionally biased toward polar residues.

The sequence is that of Brix domain-containing protein C1B9.03c from Schizosaccharomyces pombe (strain 972 / ATCC 24843) (Fission yeast).